We begin with the raw amino-acid sequence, 62 residues long: Conorfamide-Tx1 (62 aa).

Positions 1–19 (MSGRGFLLLALLLLVTVEA) are cleaved as a signal peptide. Positions 20–26 (TKVEKNK) are excised as a propeptide. A Tyrosine amide modification is found at Tyr-46. A propeptide spanning residues 47 to 62 (GRRDMQSPLLSERLRF) is cleaved from the precursor.

Belongs to the FARP (FMRFamide related peptide) family. Expressed by the venom duct.

It localises to the secreted. Its function is as follows. This peptide does not show activity on human and mouse sensory neuron-specific G-protein coupled receptors MRGPRX1. This Conus textile (Cloth-of-gold cone) protein is Conorfamide-Tx1.